The chain runs to 100 residues: Small ribosomal subunit protein uS14c (100 aa).

The tract at residues 1–22 (MARKGLIQRENKRQKLEQKYHS) is disordered. The segment covering 7 to 20 (IQRENKRQKLEQKY) has biased composition (basic and acidic residues).

Belongs to the universal ribosomal protein uS14 family. Part of the 30S ribosomal subunit.

The protein resides in the plastid. Its subcellular location is the chloroplast. Functionally, binds 16S rRNA, required for the assembly of 30S particles. The polypeptide is Small ribosomal subunit protein uS14c (Daucus carota (Wild carrot)).